A 68-amino-acid polypeptide reads, in one-letter code: MDKVVKFAEPGRAFAKDSIRLVKRCTKPDRKEFQKIAIATAVGFCIMGFIGFFVKLIHIPINNIIVGS.

At 1-32 the chain is on the cytoplasmic side; sequence MDKVVKFAEPGRAFAKDSIRLVKRCTKPDRKE. Residues 33–61 traverse the membrane as a helical segment; sequence FQKIAIATAVGFCIMGFIGFFVKLIHIPI. The Extracellular segment spans residues 62-68; the sequence is NNIIVGS.

This sequence belongs to the SecE/SEC61-gamma family. As to quaternary structure, heterotrimeric complex composed of SEC61-alpha, SEC61-beta and SEC61-gamma.

It is found in the endoplasmic reticulum membrane. Functionally, necessary for protein translocation in the endoplasmic reticulum. This is Protein transport protein Sec61 gamma-2 subunit (Sec61gamma) from Drosophila melanogaster (Fruit fly).